The following is a 455-amino-acid chain: Ammonium transporter Rh type B (455 aa).

Residues 1–10 (MARVPRHRRL) are Cytoplasmic-facing. A helical transmembrane segment spans residues 11 to 31 (VLPLLCLLFQGATALLFAIFV). The Extracellular segment spans residues 32-58 (RYNHETDAALWHWGNHSNVDNEFYFRY). Residue N46 is glycosylated (N-linked (GlcNAc...) asparagine). The helical transmembrane segment at 59 to 79 (PSFQDVHVMVFVGFGFLMVFL) threads the bilayer. Residues 80–83 (QRYG) lie on the Cytoplasmic side of the membrane. Residues 84 to 104 (FSSVGFTFLVASLTLQWATLL) form a helical membrane-spanning segment. Topologically, residues 105–121 (QGFLHSFHGGHIHVGVE) are extracellular. A helical membrane pass occupies residues 122 to 142 (SLINADFCAGAVLISFGAVLG). Over 143-146 (KTGP) the chain is Cytoplasmic. The helical transmembrane segment at 147-167 (AQLLLMALLEAVLFSVNEFIL) threads the bilayer. Topologically, residues 168–175 (LSLLGVRD) are extracellular. Residues 176–198 (AGGSMTIHTFGAYFGLFLSWVLY) traverse the membrane as a helical segment. Over 199 to 216 (RSQLEKSRHRQSSVYNSD) the chain is Cytoplasmic. The chain crosses the membrane as a helical span at residues 217–237 (LFAMIGTIFLWVFWPSFNSAP). At 238–248 (TALGDGQHRTV) the chain is on the extracellular side. Residues 249–269 (VNTYYSLTASTLSTFALSALV) traverse the membrane as a helical segment. The Cytoplasmic segment spans residues 270–279 (SGDGRLDMVH). Residues 280 to 300 (VQNAALAGGVVVGTSSEMMLT) form a helical membrane-spanning segment. Position 301 (P301) is a topological domain, extracellular. Residues 302-322 (FGALAAGFLAGTVSTLGYKFF) form a helical membrane-spanning segment. Residues 323–343 (TPILESRFKLQDTCGVHNLHG) lie on the Cytoplasmic side of the membrane. Residues 344–364 (MPGVLGAILGVVVAALATHEA) traverse the membrane as a helical segment. Over 365 to 390 (YGDGLQSVFPLIAKGQRSATSQAVYQ) the chain is Extracellular. Residues 391–411 (LFGMFVTLVFASVGGSLGGLL) form a helical membrane-spanning segment. Residues 412 to 455 (LRLPFLDSPPDSQCFEDQVYWEVPGEQETETQRPLRGGESDTRA) lie on the Cytoplasmic side of the membrane. Residues 413–421 (RLPFLDSPP) are interaction with ANK3. Residues 434-455 (VPGEQETETQRPLRGGESDTRA) are disordered. Basic and acidic residues predominate over residues 441–455 (ETQRPLRGGESDTRA).

It belongs to the ammonium transporter (TC 2.A.49) family. Rh subfamily. As to quaternary structure, interacts (via C-terminus) with ANK2 and ANK3; required for targeting to the basolateral membrane. Post-translationally, N-glycosylated. Expressed in kidney by connecting segments and collecting tubules. Also expressed in liver by perivenous hepatocytes. Expressed in the forestomach and the fundus of the stomach. Expressed in duodenum, jejunum, ileum and colon at the level of villous (at protein level). Specifically expressed in kidney where it is restricted to the epithelial linings of the convoluted tubules and the loop of Henle. Also detected in ovary. Expressed by hepatocytes and dermal hair follicles and papillae.

It is found in the cell membrane. The protein localises to the basolateral cell membrane. It catalyses the reaction NH4(+)(in) = NH4(+)(out). It carries out the reaction methylamine(out) = methylamine(in). The catalysed reaction is CO2(out) = CO2(in). Inhibited by amiloride. Its function is as follows. Ammonium transporter involved in the maintenance of acid-base homeostasis. Transports ammonium and its related derivative methylammonium across the basolateral plasma membrane of epithelial cells likely contributing to renal transepithelial ammonia transport and ammonia metabolism. May transport either NH4(+) or NH3 ammonia species predominantly mediating an electrogenic NH4(+) transport. May act as a CO2 channel providing for renal acid secretion. The polypeptide is Ammonium transporter Rh type B (Rhbg) (Mus musculus (Mouse)).